A 385-amino-acid chain; its full sequence is S-adenosylmethionine synthase (385 aa).

His-16 serves as a coordination point for ATP. Asp-18 contributes to the Mg(2+) binding site. Residue Glu-44 participates in K(+) binding. Residues Glu-57 and Gln-100 each contribute to the L-methionine site. The flexible loop stretch occupies residues 100-110 (QSPDINQGVDK). ATP-binding positions include 165-167 (DAK), 231-232 (RF), Asp-240, 246-247 (RK), Ala-263, and Lys-267. Asp-240 is an L-methionine binding site. Lys-271 lines the L-methionine pocket.

It belongs to the AdoMet synthase family. In terms of assembly, homotetramer; dimer of dimers. It depends on Mg(2+) as a cofactor. Requires K(+) as cofactor.

It localises to the cytoplasm. It catalyses the reaction L-methionine + ATP + H2O = S-adenosyl-L-methionine + phosphate + diphosphate. Its pathway is amino-acid biosynthesis; S-adenosyl-L-methionine biosynthesis; S-adenosyl-L-methionine from L-methionine: step 1/1. Functionally, catalyzes the formation of S-adenosylmethionine (AdoMet) from methionine and ATP. The overall synthetic reaction is composed of two sequential steps, AdoMet formation and the subsequent tripolyphosphate hydrolysis which occurs prior to release of AdoMet from the enzyme. The polypeptide is S-adenosylmethionine synthase (Vibrio cholerae serotype O1 (strain ATCC 39315 / El Tor Inaba N16961)).